The sequence spans 275 residues: 2,3,4,5-tetrahydropyridine-2,6-dicarboxylate N-succinyltransferase (275 aa).

Residues Arg-104 and Asp-141 each contribute to the substrate site.

It belongs to the transferase hexapeptide repeat family. Homotrimer.

It localises to the cytoplasm. The enzyme catalyses (S)-2,3,4,5-tetrahydrodipicolinate + succinyl-CoA + H2O = (S)-2-succinylamino-6-oxoheptanedioate + CoA. It participates in amino-acid biosynthesis; L-lysine biosynthesis via DAP pathway; LL-2,6-diaminopimelate from (S)-tetrahydrodipicolinate (succinylase route): step 1/3. The polypeptide is 2,3,4,5-tetrahydropyridine-2,6-dicarboxylate N-succinyltransferase (Mannheimia succiniciproducens (strain KCTC 0769BP / MBEL55E)).